The sequence spans 581 residues: Leucine aminopeptidase 3, chloroplastic (581 aa).

A chloroplast-targeting transit peptide spans 1-50; sequence MAVTLVTSCASSSRFHFRSFSSSPSSLSSCFVRFQLLSRLRVSFAITPLY. Residues K350 and D355 each coordinate Mn(2+). K362 is a catalytic residue. 3 residues coordinate Mn(2+): D375, D435, and E437. Residue R439 is part of the active site.

Belongs to the peptidase M17 family. As to quaternary structure, homohexamer (dimer of homotrimers). Mn(2+) serves as cofactor.

It is found in the plastid. The protein localises to the chloroplast. It carries out the reaction Release of an N-terminal amino acid, Xaa-|-Yaa-, in which Xaa is preferably Leu, but may be other amino acids including Pro although not Arg or Lys, and Yaa may be Pro. Amino acid amides and methyl esters are also readily hydrolyzed, but rates on arylamides are exceedingly low.. The enzyme catalyses Release of N-terminal proline from a peptide.. Its function is as follows. Presumably involved in the processing and regular turnover of intracellular proteins. Catalyzes the removal of unsubstituted N-terminal amino acids from various peptides. Possesses Cys-Gly dipeptidase activity. This Arabidopsis thaliana (Mouse-ear cress) protein is Leucine aminopeptidase 3, chloroplastic.